Consider the following 422-residue polypeptide: Trichothecene biosynthesis transcription regulator TRI10 (422 aa).

This sequence belongs to the TRI10 transcription regulator family.

The protein resides in the nucleus. Transcriptional activator of all of the trichothecene biosynthesis genes. Acts upstream of the cluster-encoded transcription factor TRI6 and is necessary for full expression of both the other trichothecene genes and the genes for the primary metabolic pathway that precedes the trichothecene biosynthetic pathway. The sequence is that of Trichothecene biosynthesis transcription regulator TRI10 from Trichoderma arundinaceum.